The sequence spans 366 residues: Chorismate synthase (366 aa).

Residues Arg48 and Arg54 each contribute to the NADP(+) site. Residues 125–127 (RSS), 238–239 (NA), Gly278, 293–297 (KPTSS), and Arg319 each bind FMN.

It belongs to the chorismate synthase family. In terms of assembly, homotetramer. FMNH2 serves as cofactor.

The enzyme catalyses 5-O-(1-carboxyvinyl)-3-phosphoshikimate = chorismate + phosphate. It participates in metabolic intermediate biosynthesis; chorismate biosynthesis; chorismate from D-erythrose 4-phosphate and phosphoenolpyruvate: step 7/7. Catalyzes the anti-1,4-elimination of the C-3 phosphate and the C-6 proR hydrogen from 5-enolpyruvylshikimate-3-phosphate (EPSP) to yield chorismate, which is the branch point compound that serves as the starting substrate for the three terminal pathways of aromatic amino acid biosynthesis. This reaction introduces a second double bond into the aromatic ring system. This is Chorismate synthase from Burkholderia ambifaria (strain ATCC BAA-244 / DSM 16087 / CCUG 44356 / LMG 19182 / AMMD) (Burkholderia cepacia (strain AMMD)).